The chain runs to 2896 residues: Protein PRRC2C (2896 aa).

Lys27 carries the N6-acetyllysine modification. The tract at residues 28–212 is disordered; it reads GKSLETQKTT…STAGTSEQND (185 aa). Positions 88–97 are enriched in basic and acidic residues; it reads QEQHEEEKTP. Over residues 105-119 the composition is skewed to low complexity; that stretch reads KPGVAAPPEVAPAPK. Residues 134–144 show a composition bias toward polar residues; it reads QVNSQFQQEFP. The span at 151–160 shows a compositional bias: basic and acidic residues; the sequence is DQEKKEKETN. Ser187 and Ser191 each carry phosphoserine. Residues 201–211 are compositionally biased toward polar residues; it reads DESTAGTSEQN. Arg242 is subject to Asymmetric dimethylarginine; alternate. Arg242 is subject to Omega-N-methylarginine; alternate. Arg255 and Arg266 each carry asymmetric dimethylarginine. Disordered stretches follow at residues 264-729 and 750-788; these read PMRF…QHLA and SGRP…SFEH. Omega-N-methylarginine occurs at positions 279 and 281. The span at 301–310 shows a compositional bias: basic and acidic residues; sequence ELKELDKFDN. Ser335 is subject to Phosphoserine. A compositionally biased stretch (polar residues) spans 341–358; sequence GSNSPKENNSEDQGSKAS. Positions 359–368 are enriched in basic and acidic residues; sequence ENNENKKETD. The span at 370 to 381 shows a compositional bias: polar residues; sequence VSNTKSSSQIPA. Lys392 carries the post-translational modification N6-acetyllysine. Ser395 and Ser500 each carry phosphoserine. Polar residues predominate over residues 395–405; sequence SFNQERGTSSH. Residues 465-648 show a composition bias toward basic and acidic residues; sequence RREEEERRME…EATPVVHETE (184 aa). Over residues 676-708 the composition is skewed to low complexity; the sequence is QRQQEQMKQQQWQQQQQQGVLPQTVPSQPSSST. Residues 759–769 show a composition bias toward pro residues; the sequence is PIHPGMIPPKP. Ser779, Ser785, and Ser801 each carry phosphoserine. The disordered stretch occupies residues 804 to 1118; the sequence is RMLWGSDPYP…PVSTVQVEPA (315 aa). Composition is skewed to basic and acidic residues over residues 825-836, 852-867, and 878-888; these read ATEEPEDVRSEA, NQLE…RESS, and SVEDVRPHHTD. Phosphoserine is present on residues Ser867, Ser878, Ser920, and Ser929. Composition is skewed to basic and acidic residues over residues 954 to 993, 1000 to 1010, and 1020 to 1058; these read IDSK…ETRW, NRREEVNDRPV, and VLRD…KKDL. Residues 1020–1046 adopt a coiled-coil conformation; the sequence is VLRDMKEEREQRKEKEGEKAEKVTEKV. The span at 1059 to 1081 shows a compositional bias: pro residues; that stretch reads PPPPPPPQPPAPIQPQSVPPPIQ. Residues 1089–1100 are compositionally biased toward polar residues; the sequence is STETATLAQKPS. Lys1133 is covalently cross-linked (Glycyl lysine isopeptide (Lys-Gly) (interchain with G-Cter in SUMO2)). Composition is skewed to basic and acidic residues over residues 1143-1163, 1170-1180, 1214-1230, and 1237-1248; these read SKDL…KKES, YWKEARERDWF, HTRD…RAEH, and RQREESETRSES. Disordered regions lie at residues 1143 to 1647, 1670 to 1785, 1905 to 1991, 2005 to 2164, 2218 to 2238, 2257 to 2290, 2317 to 2341, and 2668 to 2701; these read SKDL…DALS, EDPQ…SAPV, APAS…TAEL, ISKK…VSEM, LPNT…SLTS, WENS…GPST, GAGT…NICK, and DIKP…QSSK. 5 positions are modified to phosphoserine: Ser1242, Ser1246, Ser1248, Ser1249, and Ser1263. Basic and acidic residues-rich tracts occupy residues 1261–1297, 1305–1330, 1381–1418, and 1429–1446; these read RGSE…ENKK, FKPD…DKAK, EVPK…PARE, and PRQD…REAA. Thr1265 and Thr1267 each carry phosphothreonine. 2 stretches are compositionally biased toward polar residues: residues 1457–1469 and 1477–1491; these read TNGT…QEPV and GNKT…SSDQ. Basic and acidic residues predominate over residues 1505–1517; that stretch reads FNERRERDEKKNA. At Ser1544 the chain carries Phosphoserine. 2 stretches are compositionally biased toward basic and acidic residues: residues 1620–1634 and 1692–1704; these read NSKD…DPKP and RLQD…KEEQ. A coiled-coil region spans residues 1682-1717; sequence TEVVSKKQQKRLQDEERRKKEEQVIQVWNKKNANEK. A compositionally biased stretch (low complexity) spans 1742 to 1785; it reads SSASVPPLASAPLPPSTSASVPASTSAPLPATLTPVPASTSAPV. Residues 1913–1929 show a composition bias toward pro residues; sequence APAPTPVSAPNPAPPAP. Over residues 1943 to 1952 the composition is skewed to low complexity; sequence PLQTTSQSSK. Residue Thr1965 is modified to Phosphothreonine. Polar residues predominate over residues 1976 to 1986; the sequence is KSIQTPQSHGT. Phosphoserine occurs at positions 1983 and 2013. Over residues 2019-2035 the composition is skewed to polar residues; it reads SVSAWNKPLTSFGSAPS. Residues 2075 to 2088 are compositionally biased toward basic and acidic residues; it reads KSADKIPEPKEQRQ. Position 2105 is a phosphoserine (Ser2105). Residues 2108 to 2132 show a composition bias toward basic and acidic residues; sequence ENKEHKPGPIGKERSLKNRKVKDAQ. Ser2143 bears the Phosphoserine mark. Residues 2257-2267 show a composition bias toward basic and acidic residues; it reads WENSPNVREKG. Ser2260 is modified (phosphoserine). The segment covering 2269-2290 has biased composition (polar residues); that stretch reads PVTSTAPPIATGVSSSASGPST. Positions 2320–2334 are enriched in low complexity; it reads TYTTSSLSTKSTTTS. Residues Thr2673 and Thr2682 each carry the phosphothreonine modification. A compositionally biased stretch (polar residues) spans 2679–2701; the sequence is RSTTPTSSPFRATSTSPNSQSSK. Phosphoserine occurs at positions 2686 and 2694. Arg2814 is modified (omega-N-methylarginine). The residue at position 2823 (Arg2823) is an Asymmetric dimethylarginine; alternate. At Arg2823 the chain carries Omega-N-methylarginine; alternate. Residues 2824–2833 are compositionally biased toward polar residues; it reads FFSEQQQSKQ. The disordered stretch occupies residues 2824–2896; that stretch reads FFSEQQQSKQ…QAIKTEETKS (73 aa).

As to expression, overexpressed in bladder cancer.

It is found in the cytoplasm. Its subcellular location is the stress granule. In terms of biological role, required for efficient formation of stress granules. The sequence is that of Protein PRRC2C from Homo sapiens (Human).